We begin with the raw amino-acid sequence, 264 residues long: GTP cyclohydrolase FolE2 (264 aa).

This sequence belongs to the GTP cyclohydrolase IV family.

The catalysed reaction is GTP + H2O = 7,8-dihydroneopterin 3'-triphosphate + formate + H(+). The protein operates within cofactor biosynthesis; 7,8-dihydroneopterin triphosphate biosynthesis; 7,8-dihydroneopterin triphosphate from GTP: step 1/1. In terms of biological role, converts GTP to 7,8-dihydroneopterin triphosphate. The protein is GTP cyclohydrolase FolE2 of Vesicomyosocius okutanii subsp. Calyptogena okutanii (strain HA).